Consider the following 1017-residue polypeptide: Stereoselective keto-reductase af490 (1017 aa).

The tract at residues N6–H138 is N-terminal hotdog fold. The PKS/mFAS DH domain maps to N6–K311. The interval L8–A306 is dehydratase (DH). Positions L153–K311 are C-terminal hotdog fold. The interval Q532 to R720 is ketoreductase (KR).

The enzyme catalyses fumagillol + NADP(+) = 5-dehydrofumagillol + NADPH + H(+). Its pathway is secondary metabolite biosynthesis; terpenoid biosynthesis. In terms of biological role, stereoselective keto-reductase; part of the gene cluster that mediates the biosynthesis of fumagillin, a meroterpenoid that has numerous biological activities including irreversible inhibition of human type 2 methionine aminopeptidase (METAP2). Within the pathway, the keto-reductase af490 acts as a 5-dehydrofumagillol 5-reductase that stereoselectively reduces 5-keto-fumagillol to 5R-hydroxy-seco-sesquiterpene. The pathway begins with the conversion of farnesyl pyrophosphate (FPP) to beta-trans-bergamotene by the membrane-bound beta-trans-bergamotene synthase af520. The multifunctional cytochrome P450 monooxygenase af510 then converts beta-trans-bergamotene into 5-keto-demethoxyfumagillol via several oxydation steps. 5-keto-demethoxyfumagillol is then subjected to successive C-6 hydroxylation and O-methylation by the dioxygenase af480 and O-methyltransferase af390-400, respectively, to yield 5-keto-fumagillol, which is then stereoselectively reduced by the keto-reductase af490 to 5R-hydroxy-seco-sesquiterpene. The next step is the polyketide transferase af380-catalyzed transfer of a dodecapentaenoyl group synthesized by the polyketide synthase af370 onto 5R-hydroxy-seco-sesquiterpene which leads to the production of prefumagillin. Finally, oxidative cleavage by the monooxygenase af470 converts prefumagillin to fumagillin. This Aspergillus fumigatus (strain ATCC MYA-4609 / CBS 101355 / FGSC A1100 / Af293) (Neosartorya fumigata) protein is Stereoselective keto-reductase af490.